Reading from the N-terminus, the 471-residue chain is 3-isopropylmalate dehydratase large subunit (471 aa).

3 residues coordinate [4Fe-4S] cluster: Cys347, Cys407, and Cys410.

It belongs to the aconitase/IPM isomerase family. LeuC type 1 subfamily. As to quaternary structure, heterodimer of LeuC and LeuD. Requires [4Fe-4S] cluster as cofactor.

It catalyses the reaction (2R,3S)-3-isopropylmalate = (2S)-2-isopropylmalate. Its pathway is amino-acid biosynthesis; L-leucine biosynthesis; L-leucine from 3-methyl-2-oxobutanoate: step 2/4. Functionally, catalyzes the isomerization between 2-isopropylmalate and 3-isopropylmalate, via the formation of 2-isopropylmaleate. This is 3-isopropylmalate dehydratase large subunit from Granulibacter bethesdensis (strain ATCC BAA-1260 / CGDNIH1).